Reading from the N-terminus, the 405-residue chain is Caspase-1 (405 aa).

Positions 1-91 (MADKVLKEKR…HLAETLRLSS (91 aa)) constitute a CARD domain. A propeptide spanning residues 1-119 (MADKVLKEKR…SSPALQAMPD (119 aa)) is cleaved from the precursor. Active-site residues include histidine 238 and cysteine 286. Residues 299–317 (STGTSGNSSSLAPDDFEDD) constitute a propeptide that is removed on maturation. Phosphoserine is present on serine 303.

This sequence belongs to the peptidase C14A family. Heterotetramer that consists of two anti-parallel arranged heterodimers, each one formed by a 20 kDa (Caspase-1 subunit p20) and a 10 kDa (Caspase-1 subunit p10) subunit. May be a component of the inflammasome, a protein complex which also includes PYCARD, CARD8 and NLRP2 and whose function would be the activation of pro-inflammatory caspases. Component of the AIM2 PANoptosome complex, a multiprotein complex that drives inflammatory cell death (PANoptosis). Both the p10 and p20 subunits interact with MEFV. Interacts with CARD17P/INCA and CARD18. Interacts with SERPINB1; this interaction regulates CASP1 activity. In terms of assembly, heterotetramer that consists of two anti-parallel arranged heterodimers, each one formed by a 20 kDa (Caspase-1 subunit p20) and a 10 kDa (Caspase-1 subunit p10) subunit. Post-translationally, the two subunits are derived from the precursor sequence by an autocatalytic mechanism. In terms of processing, ubiquitinated via 'Lys-11'-linked polyubiquitination. Deubiquitinated by USP8.

It is found in the cytoplasm. Its subcellular location is the cell membrane. It carries out the reaction Strict requirement for an Asp residue at position P1 and has a preferred cleavage sequence of Tyr-Val-Ala-Asp-|-.. Its function is as follows. Thiol protease involved in a variety of inflammatory processes by proteolytically cleaving other proteins, such as the precursors of the inflammatory cytokines interleukin-1 beta (IL1B) and interleukin 18 (IL18) as well as the pyroptosis inducer Gasdermin-D (GSDMD), into active mature peptides. Plays a key role in cell immunity as an inflammatory response initiator: once activated through formation of an inflammasome complex, it initiates a pro-inflammatory response through the cleavage of the two inflammatory cytokines IL1B and IL18, releasing the mature cytokines which are involved in a variety of inflammatory processes. Cleaves a tetrapeptide after an Asp residue at position P1. Also initiates pyroptosis, a programmed lytic cell death pathway, through cleavage of GSDMD. In contrast to cleavage of interleukin IL1B, recognition and cleavage of GSDMD is not strictly dependent on the consensus cleavage site but depends on an exosite interface on CASP1 that recognizes and binds the Gasdermin-D, C-terminal (GSDMD-CT) part. Cleaves and activates CASP7 in response to bacterial infection, promoting plasma membrane repair. Upon inflammasome activation, during DNA virus infection but not RNA virus challenge, controls antiviral immunity through the cleavage of CGAS, rendering it inactive. In apoptotic cells, cleaves SPHK2 which is released from cells and remains enzymatically active extracellularly. The protein is Caspase-1 (CASP1) of Equus caballus (Horse).